The primary structure comprises 288 residues: Probable ketoamine kinase VC_1539 (288 aa).

92–94 (NYL) serves as a coordination point for ATP. The Proton acceptor role is filled by D195.

It belongs to the fructosamine kinase family.

In terms of biological role, ketoamine kinase that phosphorylates ketoamines on the third carbon of the sugar moiety to generate ketoamine 3-phosphate. The chain is Probable ketoamine kinase VC_1539 from Vibrio cholerae serotype O1 (strain ATCC 39315 / El Tor Inaba N16961).